The chain runs to 446 residues: Dihydroorotate dehydrogenase (quinone), mitochondrial (446 aa).

The N-terminal 13 residues, 1 to 13, are a transit peptide targeting the mitochondrion; the sequence is MHSRPLPTLGRHA. Residues 40–57 form a helical membrane-spanning segment; that stretch reads AILYTAGILGGAFAGYYL. FMN-binding positions include 125 to 129 and Ser149; that span reads AGLDK. Lys129 is a binding site for substrate. A substrate-binding site is contributed by 174–178; the sequence is NRYGF. Residues Asn222 and Asn252 each contribute to the FMN site. Residues Asn252 and 252 to 257 each bind substrate; that span reads NVSSPN. Catalysis depends on Ser255, which acts as the Nucleophile. Positions 303 and 331 each coordinate FMN. A substrate-binding site is contributed by 332–333; that stretch reads NT. FMN is bound by residues Gly357, Gly387, and 408-409; that span reads YT.

The protein belongs to the dihydroorotate dehydrogenase family. Type 2 subfamily. FMN serves as cofactor.

The protein resides in the mitochondrion inner membrane. The catalysed reaction is (S)-dihydroorotate + a quinone = orotate + a quinol. It functions in the pathway pyrimidine metabolism; UMP biosynthesis via de novo pathway; orotate from (S)-dihydroorotate (quinone route): step 1/1. Its activity is regulated as follows. The activity is dependent of the presence of oxygen. Functionally, catalyzes the conversion of dihydroorotate to orotate with quinone as electron acceptor. The chain is Dihydroorotate dehydrogenase (quinone), mitochondrial (URA9) from Lachancea kluyveri (strain ATCC 58438 / CBS 3082 / BCRC 21498 / NBRC 1685 / JCM 7257 / NCYC 543 / NRRL Y-12651) (Yeast).